A 113-amino-acid polypeptide reads, in one-letter code: Ribosome-binding factor A (113 aa).

The protein belongs to the RbfA family. In terms of assembly, monomer. Binds 30S ribosomal subunits, but not 50S ribosomal subunits or 70S ribosomes.

It localises to the cytoplasm. Its function is as follows. One of several proteins that assist in the late maturation steps of the functional core of the 30S ribosomal subunit. Associates with free 30S ribosomal subunits (but not with 30S subunits that are part of 70S ribosomes or polysomes). Required for efficient processing of 16S rRNA. May interact with the 5'-terminal helix region of 16S rRNA. In Lactococcus lactis subsp. cremoris (Streptococcus cremoris), this protein is Ribosome-binding factor A.